A 199-amino-acid chain; its full sequence is NAD(P)H dehydrogenase (quinone) (199 aa).

Positions 4–190 (ILVLYYSMYG…KIARYQGEHV (187 aa)) constitute a Flavodoxin-like domain. FMN is bound by residues 10–15 (SMYGHI) and 79–81 (TRF). Tyr-12 lines the NAD(+) pocket. Trp-99 provides a ligand contact to substrate. His-134 is a binding site for FMN.

The protein belongs to the WrbA family. FMN is required as a cofactor.

The catalysed reaction is a quinone + NADH + H(+) = a quinol + NAD(+). The enzyme catalyses a quinone + NADPH + H(+) = a quinol + NADP(+). The protein is NAD(P)H dehydrogenase (quinone) of Photorhabdus laumondii subsp. laumondii (strain DSM 15139 / CIP 105565 / TT01) (Photorhabdus luminescens subsp. laumondii).